The chain runs to 335 residues: Holliday junction branch migration complex subunit RuvB (335 aa).

A large ATPase domain (RuvB-L) region spans residues 1 to 183; that stretch reads MDERIISSET…FGVIDHLEFY (183 aa). ATP is bound by residues L22, R23, G64, K67, T68, T69, 130-132, R173, Y183, and R220; that span reads EDY. Residue T68 coordinates Mg(2+). Positions 184–254 are small ATPAse domain (RuvB-S); that stretch reads TEEQLTEIVL…LAKEALTLLQ (71 aa). The interval 257–335 is head domain (RuvB-H); sequence PRGLDTIDQK…HLGISYEKEV (79 aa). DNA-binding residues include R293, R312, and R317.

It belongs to the RuvB family. As to quaternary structure, homohexamer. Forms an RuvA(8)-RuvB(12)-Holliday junction (HJ) complex. HJ DNA is sandwiched between 2 RuvA tetramers; dsDNA enters through RuvA and exits via RuvB. An RuvB hexamer assembles on each DNA strand where it exits the tetramer. Each RuvB hexamer is contacted by two RuvA subunits (via domain III) on 2 adjacent RuvB subunits; this complex drives branch migration. In the full resolvosome a probable DNA-RuvA(4)-RuvB(12)-RuvC(2) complex forms which resolves the HJ.

It localises to the cytoplasm. It catalyses the reaction ATP + H2O = ADP + phosphate + H(+). Its function is as follows. The RuvA-RuvB-RuvC complex processes Holliday junction (HJ) DNA during genetic recombination and DNA repair, while the RuvA-RuvB complex plays an important role in the rescue of blocked DNA replication forks via replication fork reversal (RFR). RuvA specifically binds to HJ cruciform DNA, conferring on it an open structure. The RuvB hexamer acts as an ATP-dependent pump, pulling dsDNA into and through the RuvAB complex. RuvB forms 2 homohexamers on either side of HJ DNA bound by 1 or 2 RuvA tetramers; 4 subunits per hexamer contact DNA at a time. Coordinated motions by a converter formed by DNA-disengaged RuvB subunits stimulates ATP hydrolysis and nucleotide exchange. Immobilization of the converter enables RuvB to convert the ATP-contained energy into a lever motion, pulling 2 nucleotides of DNA out of the RuvA tetramer per ATP hydrolyzed, thus driving DNA branch migration. The RuvB motors rotate together with the DNA substrate, which together with the progressing nucleotide cycle form the mechanistic basis for DNA recombination by continuous HJ branch migration. Branch migration allows RuvC to scan DNA until it finds its consensus sequence, where it cleaves and resolves cruciform DNA. The protein is Holliday junction branch migration complex subunit RuvB of Listeria innocua serovar 6a (strain ATCC BAA-680 / CLIP 11262).